The following is a 335-amino-acid chain: Holliday junction branch migration complex subunit RuvB (335 aa).

The tract at residues 4-184 (ADRLIDATEK…FGIVQRLEFY (181 aa)) is large ATPase domain (RuvB-L). Residues I23, R24, G65, K68, T69, T70, 131-133 (EDY), R174, Y184, and R221 contribute to the ATP site. A Mg(2+)-binding site is contributed by T69. The small ATPAse domain (RuvB-S) stretch occupies residues 185 to 255 (SVEDLSYIVG…VAELALNMID (71 aa)). Residues 258 to 335 (KSGFDYMDRK…HHFGLLPKQD (78 aa)) form a head domain (RuvB-H) region. DNA-binding residues include R313 and R318.

It belongs to the RuvB family. As to quaternary structure, homohexamer. Forms an RuvA(8)-RuvB(12)-Holliday junction (HJ) complex. HJ DNA is sandwiched between 2 RuvA tetramers; dsDNA enters through RuvA and exits via RuvB. An RuvB hexamer assembles on each DNA strand where it exits the tetramer. Each RuvB hexamer is contacted by two RuvA subunits (via domain III) on 2 adjacent RuvB subunits; this complex drives branch migration. In the full resolvosome a probable DNA-RuvA(4)-RuvB(12)-RuvC(2) complex forms which resolves the HJ.

The protein resides in the cytoplasm. The catalysed reaction is ATP + H2O = ADP + phosphate + H(+). The RuvA-RuvB-RuvC complex processes Holliday junction (HJ) DNA during genetic recombination and DNA repair, while the RuvA-RuvB complex plays an important role in the rescue of blocked DNA replication forks via replication fork reversal (RFR). RuvA specifically binds to HJ cruciform DNA, conferring on it an open structure. The RuvB hexamer acts as an ATP-dependent pump, pulling dsDNA into and through the RuvAB complex. RuvB forms 2 homohexamers on either side of HJ DNA bound by 1 or 2 RuvA tetramers; 4 subunits per hexamer contact DNA at a time. Coordinated motions by a converter formed by DNA-disengaged RuvB subunits stimulates ATP hydrolysis and nucleotide exchange. Immobilization of the converter enables RuvB to convert the ATP-contained energy into a lever motion, pulling 2 nucleotides of DNA out of the RuvA tetramer per ATP hydrolyzed, thus driving DNA branch migration. The RuvB motors rotate together with the DNA substrate, which together with the progressing nucleotide cycle form the mechanistic basis for DNA recombination by continuous HJ branch migration. Branch migration allows RuvC to scan DNA until it finds its consensus sequence, where it cleaves and resolves cruciform DNA. The polypeptide is Holliday junction branch migration complex subunit RuvB (Pseudoalteromonas translucida (strain TAC 125)).